The following is a 622-amino-acid chain: Wall-associated receptor kinase-like 21 (622 aa).

The signal sequence occupies residues Met-1 to Ala-21. At Thr-22 to Lys-247 the chain is on the extracellular side. 5 N-linked (GlcNAc...) asparagine glycosylation sites follow: Asn-50, Asn-114, Asn-131, Asn-160, and Asn-195. The helical transmembrane segment at Leu-248 to Ala-268 threads the bilayer. Topologically, residues Thr-269–Glu-622 are cytoplasmic. Positions Phe-314 to Lys-594 constitute a Protein kinase domain. Residues Leu-320 to Val-328 and Lys-342 each bind ATP. Asp-439 serves as the catalytic Proton acceptor.

The protein belongs to the protein kinase superfamily. Ser/Thr protein kinase family.

Its subcellular location is the membrane. The enzyme catalyses L-seryl-[protein] + ATP = O-phospho-L-seryl-[protein] + ADP + H(+). It catalyses the reaction L-threonyl-[protein] + ATP = O-phospho-L-threonyl-[protein] + ADP + H(+). Functionally, serine/threonine-protein kinase that may function as a signaling receptor of extracellular matrix component. The sequence is that of Wall-associated receptor kinase-like 21 (WAKL21) from Arabidopsis thaliana (Mouse-ear cress).